Reading from the N-terminus, the 419-residue chain is Transcription termination factor Rho (419 aa).

The 76-residue stretch at 48–123 folds into the Rho RNA-BD domain; sequence GFTCSGTLEI…VRLDSINGDH (76 aa). Residues 169–174, 181–186, and Arg-212 each bind ATP; these read GKGQRA and KIGKTV.

The protein belongs to the Rho family. In terms of assembly, homohexamer. The homohexamer assembles into an open ring structure.

In terms of biological role, facilitates transcription termination by a mechanism that involves Rho binding to the nascent RNA, activation of Rho's RNA-dependent ATPase activity, and release of the mRNA from the DNA template. This is Transcription termination factor Rho from Neisseria gonorrhoeae.